The sequence spans 468 residues: Adenylosuccinate synthetase (468 aa).

GTP-binding positions include 23-29 and 51-53; these read GDEGKGK and GHE. The active-site Proton acceptor is the D24. The Mg(2+) site is built by D24 and G51. IMP contacts are provided by residues 24 to 27, 49 to 52, T142, R156, N238, T253, and R317; these read DEGK and NSGH. The active-site Proton donor is the H52. 313-319 serves as a coordination point for substrate; the sequence is VTTGRTR. Residues R319 and 345 to 347 contribute to the GTP site; that span reads KLD.

It belongs to the adenylosuccinate synthetase family. In terms of assembly, homodimer. It depends on Mg(2+) as a cofactor.

It localises to the cytoplasm. It catalyses the reaction IMP + L-aspartate + GTP = N(6)-(1,2-dicarboxyethyl)-AMP + GDP + phosphate + 2 H(+). Its pathway is purine metabolism; AMP biosynthesis via de novo pathway; AMP from IMP: step 1/2. Plays an important role in the salvage pathway for purine nucleotide biosynthesis. Catalyzes the first committed step in the biosynthesis of AMP from IMP. This chain is Adenylosuccinate synthetase, found in Theileria annulata.